The primary structure comprises 230 residues: MSIVIMTGTGTDVGKTVATGAVACVLQKEGYEPFIVKPAQTGEPEGEGDAPRVTALTGIDNAETLYRFPEPLAPATSARRANMPYPELTTVAEEIKSFDKPGRVVLVEGAGGLLVRIGQDWTIADLARELGAPIIVVCSTGLGSLNEAELTVEAATRRGLTVLGLIGGSIPDSPDLATRCNKEDLPVVTGTDVLGYIPEGAGGWSQQRFVQEAPGFFVPDVVGRVTRESD.

Residue Asp-12 to Val-17 coordinates ATP. Thr-16 is a Mg(2+) binding site. Lys-37 is an active-site residue. Thr-41 contacts substrate. ATP-binding positions include Asp-49, Glu-108 to Gly-111, Gly-168 to Ser-169, and Pro-198 to Gly-200. Residues Asp-49 and Glu-108 each coordinate Mg(2+).

It belongs to the dethiobiotin synthetase family. Homodimer. The cofactor is Mg(2+).

The protein localises to the cytoplasm. The catalysed reaction is (7R,8S)-7,8-diammoniononanoate + CO2 + ATP = (4R,5S)-dethiobiotin + ADP + phosphate + 3 H(+). The protein operates within cofactor biosynthesis; biotin biosynthesis; biotin from 7,8-diaminononanoate: step 1/2. Catalyzes a mechanistically unusual reaction, the ATP-dependent insertion of CO2 between the N7 and N8 nitrogen atoms of 7,8-diaminopelargonic acid (DAPA, also called 7,8-diammoniononanoate) to form a ureido ring. This Corynebacterium kroppenstedtii (strain DSM 44385 / JCM 11950 / CIP 105744 / CCUG 35717) protein is ATP-dependent dethiobiotin synthetase BioD.